The following is a 373-amino-acid chain: Mannan endo-1,4-beta-mannosidase A (373 aa).

An N-terminal signal peptide occupies residues 1 to 17 (MKGLFAFGLGLLSLVNA). Substrate is bound by residues Trp81, Asn193, and 194-196 (EPR). Glu194 serves as the catalytic Proton donor/acceptor. The cysteines at positions 197 and 200 are disulfide-linked. Residues Glu230, Tyr267, and Trp271 each contribute to the substrate site. A disulfide bridge links Cys289 with Cys296. The active-site Nucleophile is the Glu300. A disulfide bond links Cys308 and Cys359. Residue Trp332 participates in substrate binding.

It belongs to the glycosyl hydrolase 5 (cellulase A) family. In terms of assembly, monomer. In terms of processing, not glycosylated.

Its subcellular location is the secreted. It carries out the reaction Random hydrolysis of (1-&gt;4)-beta-D-mannosidic linkages in mannans, galactomannans and glucomannans.. Endo-1,4-mannanase that catalyzes the random hydrolysis of (1-&gt;4)-beta-D-mannosidic linkages in mannans and heteromannans. It is a crucial enzyme for depolymerization of seed galactomannans and wood galactoglucomannans. Hydrolyzes structurally different mannan polysaccharides, such as galactomannans, glucomannans, and beta-1,4-mannans from different sources, yielding principally mannobiose. Also has transglycosylation activity. The sequence is that of Mannan endo-1,4-beta-mannosidase A from Podospora anserina (strain S / ATCC MYA-4624 / DSM 980 / FGSC 10383) (Pleurage anserina).